A 158-amino-acid chain; its full sequence is 2-C-methyl-D-erythritol 2,4-cyclodiphosphate synthase (158 aa).

The a divalent metal cation site is built by Asp-8 and His-10. 4-CDP-2-C-methyl-D-erythritol 2-phosphate contacts are provided by residues 8–10 (DVH) and 34–35 (HS). His-42 contacts a divalent metal cation. Residues 56-58 (DIG), 61-65 (FPDTD), 100-106 (AQAPKMA), 132-135 (TTSE), Phe-139, and Arg-142 contribute to the 4-CDP-2-C-methyl-D-erythritol 2-phosphate site.

It belongs to the IspF family. As to quaternary structure, homotrimer. It depends on a divalent metal cation as a cofactor.

It catalyses the reaction 4-CDP-2-C-methyl-D-erythritol 2-phosphate = 2-C-methyl-D-erythritol 2,4-cyclic diphosphate + CMP. The protein operates within isoprenoid biosynthesis; isopentenyl diphosphate biosynthesis via DXP pathway; isopentenyl diphosphate from 1-deoxy-D-xylulose 5-phosphate: step 4/6. Its function is as follows. Involved in the biosynthesis of isopentenyl diphosphate (IPP) and dimethylallyl diphosphate (DMAPP), two major building blocks of isoprenoid compounds. Catalyzes the conversion of 4-diphosphocytidyl-2-C-methyl-D-erythritol 2-phosphate (CDP-ME2P) to 2-C-methyl-D-erythritol 2,4-cyclodiphosphate (ME-CPP) with a corresponding release of cytidine 5-monophosphate (CMP). In Aliivibrio fischeri (strain ATCC 700601 / ES114) (Vibrio fischeri), this protein is 2-C-methyl-D-erythritol 2,4-cyclodiphosphate synthase.